Consider the following 271-residue polypeptide: ATP synthase subunit a (271 aa).

5 helical membrane passes run 40–60 (TINI…LVLF), 100–120 (LIAP…LMDL), 146–166 (DVNV…FYSI), 220–240 (LIFI…LNVP), and 242–262 (AIFH…LTIV).

This sequence belongs to the ATPase A chain family. In terms of assembly, F-type ATPases have 2 components, CF(1) - the catalytic core - and CF(0) - the membrane proton channel. CF(1) has five subunits: alpha(3), beta(3), gamma(1), delta(1), epsilon(1). CF(0) has three main subunits: a(1), b(2) and c(9-12). The alpha and beta chains form an alternating ring which encloses part of the gamma chain. CF(1) is attached to CF(0) by a central stalk formed by the gamma and epsilon chains, while a peripheral stalk is formed by the delta and b chains.

The protein resides in the cell inner membrane. Its function is as follows. Key component of the proton channel; it plays a direct role in the translocation of protons across the membrane. This chain is ATP synthase subunit a, found in Escherichia coli O1:K1 / APEC.